A 308-amino-acid chain; its full sequence is Glycerol-3-phosphate dehydrogenase [NAD(P)+] (308 aa).

Positions 13, 33, and 81 each coordinate NADPH. 2 residues coordinate sn-glycerol 3-phosphate: Lys-81 and Gly-109. An NADPH-binding site is contributed by Ala-113. Lys-163, Asp-216, Ser-226, Arg-227, and Asn-228 together coordinate sn-glycerol 3-phosphate. Lys-163 functions as the Proton acceptor in the catalytic mechanism. An NADPH-binding site is contributed by Arg-227. Glu-253 is a binding site for NADPH.

This sequence belongs to the NAD-dependent glycerol-3-phosphate dehydrogenase family.

It localises to the cytoplasm. The enzyme catalyses sn-glycerol 3-phosphate + NAD(+) = dihydroxyacetone phosphate + NADH + H(+). It carries out the reaction sn-glycerol 3-phosphate + NADP(+) = dihydroxyacetone phosphate + NADPH + H(+). It participates in membrane lipid metabolism; glycerophospholipid metabolism. In terms of biological role, catalyzes the reduction of the glycolytic intermediate dihydroxyacetone phosphate (DHAP) to sn-glycerol 3-phosphate (G3P), the key precursor for phospholipid synthesis. This Thermosynechococcus vestitus (strain NIES-2133 / IAM M-273 / BP-1) protein is Glycerol-3-phosphate dehydrogenase [NAD(P)+].